Consider the following 498-residue polypeptide: MRINPTTSGPGVSALEKKNLGHIAQIIGPVLDVVFPPGKMPNIYNALVVKGRDTVSQQINVTCEVQQLLGNNRVRAVAMSATDGLMRGMEVIDTGAPLSVPVGGATLGRIFNVLGEPVDDLGPVDTGTTSPIHRSAPAFIQLDTKLSIFETGIKVVDLLAPYRRGGKIGLFGGAGVGKTVLIMELINNIAKAHGGVSVFGGVGERTREGNDLYMEMKESGVINEENIAESKVALVYGQMNEPPGARMRVGLTALTMAEYFRDVNEQDVLLFIDNIFRFVQAGSEVSALLGRMPSAVGYQPTLSTEMGTLQERITSTKEGSITSIQAVYVPADDLTDPAPATTFAHLDATTVLSRGLAAKGIYPAVDPLDSTSTMLQPQIVGEEHYETAQRVKQTLQRYKELQDIIAILGLDELSEEDRLTVARARKIERFLSQPFFVAEVFTGSPGKYVGLAETIRGFKLILSGELDSLPEQAFYLVGNIDEATAKATNLEMENNLKK.

172-179 lines the ATP pocket; that stretch reads GGAGVGKT.

It belongs to the ATPase alpha/beta chains family. F-type ATPases have 2 components, CF(1) - the catalytic core - and CF(0) - the membrane proton channel. CF(1) has five subunits: alpha(3), beta(3), gamma(1), delta(1), epsilon(1). CF(0) has four main subunits: a(1), b(1), b'(1) and c(9-12).

The protein localises to the plastid. The protein resides in the chloroplast thylakoid membrane. It catalyses the reaction ATP + H2O + 4 H(+)(in) = ADP + phosphate + 5 H(+)(out). Produces ATP from ADP in the presence of a proton gradient across the membrane. The catalytic sites are hosted primarily by the beta subunits. The sequence is that of ATP synthase subunit beta, chloroplastic from Populus alba (White poplar).